A 215-amino-acid polypeptide reads, in one-letter code: MGKIYDWFEERLEIQAIADDIISKYVPPHVNIFYCLGGITLTCFLIQVATGFAMTFYYRPTVAEAFASVQYIMTDVNFGWLIRSVHRWSASMMVLMMILHVFRVYLTGGFKKPRELTWVTGVILAVLTVSFGVTGYSLPWDQIGYWAVKIVTGVPDAIPIIGAPIVELLRGSVSVGQTTLTRFYSLHTFVLPLLTAVFMLMHFLMIRKQGISGPL.

The chain crosses the membrane as a helical span at residues 32-52 (IFYCLGGITLTCFLIQVATGF). Cys35 is a heme c binding site. The heme b site is built by His86 and His100. 3 consecutive transmembrane segments (helical) span residues 90-110 (ASMM…TGGF), 116-136 (LTWV…VTGY), and 186-206 (LHTF…FLMI). Residues His187 and His202 each contribute to the heme b site.

It belongs to the cytochrome b family. PetB subfamily. As to quaternary structure, the 4 large subunits of the cytochrome b6-f complex are cytochrome b6, subunit IV (17 kDa polypeptide, PetD), cytochrome f and the Rieske protein, while the 4 small subunits are PetG, PetL, PetM and PetN. The complex functions as a dimer. Heme b serves as cofactor. It depends on heme c as a cofactor.

It localises to the plastid. The protein resides in the chloroplast thylakoid membrane. In terms of biological role, component of the cytochrome b6-f complex, which mediates electron transfer between photosystem II (PSII) and photosystem I (PSI), cyclic electron flow around PSI, and state transitions. The protein is Cytochrome b6 of Spirogyra maxima (Green alga).